The chain runs to 225 residues: NAD(P)H-quinone oxidoreductase subunit K, chloroplastic (225 aa).

Residues Cys43, Cys44, Cys108, and Cys139 each coordinate [4Fe-4S] cluster.

This sequence belongs to the complex I 20 kDa subunit family. NDH is composed of at least 16 different subunits, 5 of which are encoded in the nucleus. [4Fe-4S] cluster is required as a cofactor.

The protein resides in the plastid. It is found in the chloroplast thylakoid membrane. It catalyses the reaction a plastoquinone + NADH + (n+1) H(+)(in) = a plastoquinol + NAD(+) + n H(+)(out). The enzyme catalyses a plastoquinone + NADPH + (n+1) H(+)(in) = a plastoquinol + NADP(+) + n H(+)(out). In terms of biological role, NDH shuttles electrons from NAD(P)H:plastoquinone, via FMN and iron-sulfur (Fe-S) centers, to quinones in the photosynthetic chain and possibly in a chloroplast respiratory chain. The immediate electron acceptor for the enzyme in this species is believed to be plastoquinone. Couples the redox reaction to proton translocation, and thus conserves the redox energy in a proton gradient. The chain is NAD(P)H-quinone oxidoreductase subunit K, chloroplastic from Triticum aestivum (Wheat).